The sequence spans 524 residues: Coatomer subunit delta-1 (524 aa).

Positions 215 to 244 are disordered; that stretch reads MDMDSFASKPKGGRPSAAATAPGKGLGMKL. Residues 283–524 form the MHD domain; sequence SDPVTVTIEE…RLVAANYQVV (242 aa).

It belongs to the adaptor complexes medium subunit family. Delta-COP subfamily. As to quaternary structure, oligomeric complex that consists of at least the alpha, beta, beta', gamma, delta, epsilon and zeta subunits.

The protein localises to the cytoplasm. Its subcellular location is the golgi apparatus membrane. It is found in the cytoplasmic vesicle. It localises to the COPI-coated vesicle membrane. Its function is as follows. The coatomer is a cytosolic protein complex that binds to dilysine motifs and reversibly associates with Golgi non-clathrin-coated vesicles, which further mediate biosynthetic protein transport from the ER, via the Golgi up to the trans Golgi network. Coatomer complex is required for budding from Golgi membranes, and is essential for the retrograde Golgi-to-ER transport of dilysine-tagged proteins. The chain is Coatomer subunit delta-1 from Oryza sativa subsp. japonica (Rice).